A 110-amino-acid polypeptide reads, in one-letter code: uncharacterized protein (110 aa).

A helical membrane pass occupies residues 29-49 (GLAFIFFFLVAFYFFPAFWDL).

It is found in the membrane. This is an uncharacterized protein from Saccharomyces cerevisiae (strain ATCC 204508 / S288c) (Baker's yeast).